Reading from the N-terminus, the 928-residue chain is Isoleucine--tRNA ligase (928 aa).

The 'HIGH' region signature appears at 57–67 (PFANGNIHMGH). An L-isoleucyl-5'-AMP-binding site is contributed by E552. Residues 593-597 (KMSKS) carry the 'KMSKS' region motif. K596 contacts ATP. The Zn(2+) site is built by C887, C890, C907, and C910.

Belongs to the class-I aminoacyl-tRNA synthetase family. IleS type 1 subfamily. In terms of assembly, monomer. Zn(2+) is required as a cofactor.

It localises to the cytoplasm. It catalyses the reaction tRNA(Ile) + L-isoleucine + ATP = L-isoleucyl-tRNA(Ile) + AMP + diphosphate. Functionally, catalyzes the attachment of isoleucine to tRNA(Ile). As IleRS can inadvertently accommodate and process structurally similar amino acids such as valine, to avoid such errors it has two additional distinct tRNA(Ile)-dependent editing activities. One activity is designated as 'pretransfer' editing and involves the hydrolysis of activated Val-AMP. The other activity is designated 'posttransfer' editing and involves deacylation of mischarged Val-tRNA(Ile). This Lacticaseibacillus casei (strain BL23) (Lactobacillus casei) protein is Isoleucine--tRNA ligase.